We begin with the raw amino-acid sequence, 555 residues long: Potassium-transporting ATPase potassium-binding subunit (555 aa).

The next 10 helical transmembrane spans lie at 2 to 22 (IWVA…PTGI), 60 to 80 (QYAL…YFIF), 130 to 150 (IGIT…VMAF), 173 to 193 (VFLP…VPQT), 246 to 266 (MSNI…PFTY), 278 to 298 (ILFV…TTSE), 374 to 394 (AGFV…GLMV), 412 to 432 (LIAV…ALAL), 483 to 503 (LVMF…AASL), and 525 to 545 (GIFI…MLVL).

Belongs to the KdpA family. As to quaternary structure, the system is composed of three essential subunits: KdpA, KdpB and KdpC.

The protein resides in the cell membrane. In terms of biological role, part of the high-affinity ATP-driven potassium transport (or Kdp) system, which catalyzes the hydrolysis of ATP coupled with the electrogenic transport of potassium into the cytoplasm. This subunit binds the extracellular potassium ions and delivers the ions to the membrane domain of KdpB through an intramembrane tunnel. The protein is Potassium-transporting ATPase potassium-binding subunit of Bacillus cereus (strain AH820).